A 158-amino-acid polypeptide reads, in one-letter code: Snaclec crotocetin-1 (158 aa).

The first 23 residues, 1–23 (MGRFIFVSFGLLVVFLSLSGTGA), serve as a signal peptide directing secretion. Cystine bridges form between Cys-27–Cys-38, Cys-55–Cys-152, and Cys-127–Cys-144. Positions 34 to 153 (YDQYCYRVIK…CEEKNLFVCK (120 aa)) constitute a C-type lectin domain.

The protein belongs to the snaclec family. As to quaternary structure, heterodimer; disulfide-linked. Expressed by the venom gland.

The protein resides in the secreted. Interferes with one step of hemostasis (modulation of platelet aggregation, or coagulation cascade, for example). This is Snaclec crotocetin-1 from Crotalus durissus terrificus (South American rattlesnake).